Here is a 144-residue protein sequence, read N- to C-terminus: MADEPHDQRPTDVIKSYLPEKGPSTSQVLAVVTLFPLGAVLLCLAGLILTGTIIGLAVATPLFVIFSPILVPAALTIALAVTGFLTSGAFGITALSSISWLLNYVRRMRGSLPEQLDHARRRVQETVGQKTREAGQRSQDVIRP.

At A2 the chain carries N-acetylalanine. A run of 3 helical transmembrane segments spans residues 28-48 (VLAV…AGLI), 53-73 (IIGL…LVPA), and 75-95 (LTIA…ITAL). Positions 61-72 (PLFVIFSPILVP) match the Proline-knot motif. A disordered region spans residues 124-144 (QETVGQKTREAGQRSQDVIRP).

The protein belongs to the oleosin family. In terms of tissue distribution, expressed in seeds (at protein level).

Its subcellular location is the lipid droplet. It localises to the membrane. Its function is as follows. May have a structural role to stabilize the lipid body during desiccation of the seed by preventing coalescence of the oil. Probably interacts with both lipid and phospholipid moieties of lipid bodies. May also provide recognition signals for specific lipase anchorage in lipolysis during seedling growth. In Sesamum indicum (Oriental sesame), this protein is Oleosin H2.